Here is a 72-residue protein sequence, read N- to C-terminus: Translational regulator CsrA (72 aa).

This sequence belongs to the CsrA/RsmA family. In terms of assembly, homodimer; the beta-strands of each monomer intercalate to form a hydrophobic core, while the alpha-helices form wings that extend away from the core.

It is found in the cytoplasm. Its function is as follows. A translational regulator that binds mRNA to regulate translation initiation and/or mRNA stability. Usually binds in the 5'-UTR at or near the Shine-Dalgarno sequence preventing ribosome-binding, thus repressing translation. Its main target seems to be the major flagellin gene, while its function is anatagonized by FliW. This Clostridium botulinum (strain Loch Maree / Type A3) protein is Translational regulator CsrA.